A 207-amino-acid chain; its full sequence is LexA repressor (207 aa).

The H-T-H motif DNA-binding region spans 29–49 (VREICSAVDLSSTSTVHGHLA). Active-site for autocatalytic cleavage activity residues include S128 and K166.

The protein belongs to the peptidase S24 family. In terms of assembly, homodimer.

It catalyses the reaction Hydrolysis of Ala-|-Gly bond in repressor LexA.. Represses a number of genes involved in the response to DNA damage (SOS response), including recA and lexA. In the presence of single-stranded DNA, RecA interacts with LexA causing an autocatalytic cleavage which disrupts the DNA-binding part of LexA, leading to derepression of the SOS regulon and eventually DNA repair. This chain is LexA repressor, found in Lactobacillus gasseri (strain ATCC 33323 / DSM 20243 / BCRC 14619 / CIP 102991 / JCM 1131 / KCTC 3163 / NCIMB 11718 / NCTC 13722 / AM63).